The chain runs to 603 residues: Elongation factor 4 (603 aa).

The region spanning 7 to 189 (SRIRNFSIIA…SIVHLVPPPQ (183 aa)) is the tr-type G domain. GTP contacts are provided by residues 19-24 (DHGKST) and 136-139 (NKID).

It belongs to the TRAFAC class translation factor GTPase superfamily. Classic translation factor GTPase family. LepA subfamily.

Its subcellular location is the cell inner membrane. It carries out the reaction GTP + H2O = GDP + phosphate + H(+). Functionally, required for accurate and efficient protein synthesis under certain stress conditions. May act as a fidelity factor of the translation reaction, by catalyzing a one-codon backward translocation of tRNAs on improperly translocated ribosomes. Back-translocation proceeds from a post-translocation (POST) complex to a pre-translocation (PRE) complex, thus giving elongation factor G a second chance to translocate the tRNAs correctly. Binds to ribosomes in a GTP-dependent manner. This is Elongation factor 4 from Rippkaea orientalis (strain PCC 8801 / RF-1) (Cyanothece sp. (strain PCC 8801)).